The following is a 345-amino-acid chain: Ananain (345 aa).

A signal peptide spans 1-24 (MTSKVQLVFLFLFLCVMWASPSAA). Positions 25–122 (SCDEPSDPMM…VSFDDVDISS (98 aa)) are cleaved as a propeptide — activation peptide. 3 disulfides stabilise this stretch: cysteine 144–cysteine 184, cysteine 178–cysteine 217, and cysteine 273–cysteine 325. Residue cysteine 147 is part of the active site. E64 is bound at residue cysteine 147. Active-site residues include histidine 279 and asparagine 300.

As to expression, stem (at protein level).

It catalyses the reaction Hydrolysis of proteins with broad specificity for peptide bonds. Best reported small molecule substrate Bz-Phe-Val-Arg-|-NHMec, but broader specificity than fruit bromelain.. Its activity is regulated as follows. Strongly inhibited by chicken egg-white cystatin. Inhibited by iodoacetamide and the active-site-directed inhibitor E64 (L-trans-epoxysuccinyl-leucylamide-(4-guanido)-butane). Cysteine protease. Displays a high level of diversity in substrate specificity at the P1-P1' cleavage site. A hydrophilic P1 residue is preferred, with Gln or Arg strongly preferred. Favors an Ile/Leu residue at the P2 position of substrates, with an overall higher preference for Leu. The optimal tripeptide for cleavage is Pro-Leu-Gln, with cleavage occurring after the Gln residue. Another optimal tripeptide is Val-Leu-Arg, which may imply that a hydrophobic residue at the P3 position of substrates is preferred. This Ananas comosus (Pineapple) protein is Ananain.